Reading from the N-terminus, the 210-residue chain is MELQLAIDLLNKEEAAKLAQKVEEYVDIVEIGTPIVINEGLPAVQHLNENINNAKVLADLKIMDAADYEVSQAVKYGADIVTILGVAEDASIKAAVEEAHKHGKALLVDMIAVQNLEQRAKELDEMGADYIAVHTGYDLQAEGKSPLDSLRTVKSVIKNSKVAVAGGIKPDTIKDIVAEDPDLVIVGGGIANADDPVEAAKQCRAAIEGK.

The protein belongs to the HPS/KGPDC family. HPS subfamily.

The catalysed reaction is D-ribulose 5-phosphate + formaldehyde = D-arabino-hex-3-ulose 6-phosphate. The protein operates within one-carbon metabolism; formaldehyde assimilation via RuMP pathway; D-fructose 6-phosphate from D-ribulose 5-phosphate and formaldehyde: step 1/2. Functionally, catalyzes the condensation of ribulose 5-phosphate with formaldehyde to form 3-hexulose 6-phosphate. The polypeptide is 3-hexulose-6-phosphate synthase (Staphylococcus epidermidis (strain ATCC 35984 / DSM 28319 / BCRC 17069 / CCUG 31568 / BM 3577 / RP62A)).